Consider the following 703-residue polypeptide: Lethal(3)malignant brain tumor-like protein 2 (703 aa).

The disordered stretch occupies residues 1–85; it reads MEKPRGTEEA…NNRSLDGSGS (85 aa). Ser-13 carries the phosphoserine modification. A compositionally biased stretch (acidic residues) spans 15-25; it reads PMEEEEEDDLD. Residues 35-49 show a composition bias toward low complexity; that stretch reads SYNSSAGSESSSYLE. The segment covering 50 to 60 has biased composition (acidic residues); the sequence is ESSEAENEDRE. Ser-67 is subject to Phosphoserine. The segment covering 73 to 82 has biased composition (polar residues); it reads SSANNRSLDG. The FCS-type zinc finger occupies 81-116; the sequence is DGSGSEPAVCEMCGIVGTREAFFSKTKRFCSVSCSR. The Zn(2+) site is built by Cys-90, Cys-93, Cys-110, and Cys-114. 4 MBT repeats span residues 179 to 283, 291 to 391, 397 to 500, and 508 to 604; these read FDWG…LVPP, TDWK…IKMS, MSHH…LTPP, and FAWE…LQPP. Ser-338 carries the phosphoserine modification. Residue Lys-405 forms a Glycyl lysine isopeptide (Lys-Gly) (interchain with G-Cter in SUMO2) linkage. The segment at 604–649 is disordered; sequence PVSAEPNTPQKGKDTTKKKKKQFGKKRKRIPSAKTRPLRQGSKKPL. The segment covering 619-634 has biased composition (basic residues); that stretch reads TKKKKKQFGKKRKRIP. Glycyl lysine isopeptide (Lys-Gly) (interchain with G-Cter in SUMO2) cross-links involve residues Lys-647 and Lys-673. The tract at residues 675 to 703 is disordered; that stretch reads EHQDISSLDRSPSPQLPLPIESIKQERNN. Ser-681, Ser-685, and Ser-687 each carry phosphoserine. Lys-698 participates in a covalent cross-link: Glycyl lysine isopeptide (Lys-Gly) (interchain with G-Cter in SUMO1); alternate. A Glycyl lysine isopeptide (Lys-Gly) (interchain with G-Cter in SUMO2); alternate cross-link involves residue Lys-698.

Part of the E2F6.com-1 complex in G0 phase composed of E2F6, MGA, MAX, TFDP1, CBX3, BAT8, EUHMTASE1, RING1, RNF2, MBLR, BAT8 and YAF2. Phosphorylated. In terms of tissue distribution, ubiquitous.

Its subcellular location is the nucleus. In terms of biological role, putative Polycomb group (PcG) protein. PcG proteins maintain the transcriptionally repressive state of genes, probably via a modification of chromatin, rendering it heritably changed in its expressibility. Its association with a chromatin-remodeling complex suggests that it may contribute to prevent expression of genes that trigger the cell into mitosis. Binds to monomethylated and dimethylated 'Lys-20' on histone H4. Binds histone H3 peptides that are monomethylated or dimethylated on 'Lys-4', 'Lys-9' or 'Lys-27'. This chain is Lethal(3)malignant brain tumor-like protein 2 (L3mbtl2), found in Mus musculus (Mouse).